The following is a 444-amino-acid chain: tRNA-2-methylthio-N(6)-dimethylallyladenosine synthase (444 aa).

Residues 6–124 (KTFKIITYGC…LPQLIEEIKA (119 aa)) enclose the MTTase N-terminal domain. Positions 15, 51, 85, 161, 165, and 168 each coordinate [4Fe-4S] cluster. One can recognise a Radical SAM core domain in the interval 147–377 (RARGAQAFVT…MELQNSISLA (231 aa)). The TRAM domain maps to 380–443 (EALVGQEVEV…TWLLKGEMVD (64 aa)).

Belongs to the methylthiotransferase family. MiaB subfamily. As to quaternary structure, monomer. [4Fe-4S] cluster is required as a cofactor.

It is found in the cytoplasm. The enzyme catalyses N(6)-dimethylallyladenosine(37) in tRNA + (sulfur carrier)-SH + AH2 + 2 S-adenosyl-L-methionine = 2-methylsulfanyl-N(6)-dimethylallyladenosine(37) in tRNA + (sulfur carrier)-H + 5'-deoxyadenosine + L-methionine + A + S-adenosyl-L-homocysteine + 2 H(+). Catalyzes the methylthiolation of N6-(dimethylallyl)adenosine (i(6)A), leading to the formation of 2-methylthio-N6-(dimethylallyl)adenosine (ms(2)i(6)A) at position 37 in tRNAs that read codons beginning with uridine. The sequence is that of tRNA-2-methylthio-N(6)-dimethylallyladenosine synthase from Moorella thermoacetica (strain ATCC 39073 / JCM 9320).